Reading from the N-terminus, the 152-residue chain is Transcriptional repressor NrdR (152 aa).

A zinc finger lies at 3–34; sequence CPHCHHNGSRVIDSRPAEDGMSIRRRRECVNC. The ATP-cone domain maps to 49–139; that stretch reads LLVVKKDGTR…VYRQFKDVDA (91 aa).

The protein belongs to the NrdR family. The cofactor is Zn(2+).

In terms of biological role, negatively regulates transcription of bacterial ribonucleotide reductase nrd genes and operons by binding to NrdR-boxes. The protein is Transcriptional repressor NrdR of Limosilactobacillus fermentum (strain NBRC 3956 / LMG 18251) (Lactobacillus fermentum).